Reading from the N-terminus, the 732-residue chain is Elongation factor 2 (732 aa).

One can recognise a tr-type G domain in the interval 19-230 (ERIRNMGIAA…VSFKDIIDLT (212 aa)). Residues 28–35 (AHIDHGKT), 94–98 (DTPGH), and 148–151 (NKVD) each bind GTP. Residue His-597 is modified to Diphthamide.

It belongs to the TRAFAC class translation factor GTPase superfamily. Classic translation factor GTPase family. EF-G/EF-2 subfamily.

The protein resides in the cytoplasm. Functionally, catalyzes the GTP-dependent ribosomal translocation step during translation elongation. During this step, the ribosome changes from the pre-translocational (PRE) to the post-translocational (POST) state as the newly formed A-site-bound peptidyl-tRNA and P-site-bound deacylated tRNA move to the P and E sites, respectively. Catalyzes the coordinated movement of the two tRNA molecules, the mRNA and conformational changes in the ribosome. This chain is Elongation factor 2, found in Thermococcus sibiricus (strain DSM 12597 / MM 739).